We begin with the raw amino-acid sequence, 292 residues long: MSNKAKIEVFPELESATGQMIIIDEQTKKCAILDSVLNYTQNNGRTSTKDADKLIAYIKENQLEPEWILETHIHADHLSGAHYLKGIYPNAKTAIGEGAKIVQKTFKTIYNLEHTFPTDGSQFDKLFTDDERFTIGSLQVRVISTPGHTPACVSYYIENDSVFVGDTMFMPDVGTARCDFPNGSAETLWTSMKKILELPETVKVYVCHDYPPQERGITFFTTIAEQRLSNKHIKDSVTKDEFIKMRTERDATLKAPQLLLPSIQVNIRAGELPPKEDNGISYIKIPLNYLKQ.

Zn(2+) contacts are provided by His-72, His-74, Asp-76, His-77, His-148, and Asp-166. Substrate-binding positions include 175–181, 208–210, and 284–287; these read TARCDFP, HDY, and KIPL. Position 208 (His-208) interacts with Zn(2+).

This sequence belongs to the metallo-beta-lactamase superfamily. Glyoxalase II family. Requires Zn(2+) as cofactor.

The chain is Glyoxylase B2 (gloB2) from Dictyostelium discoideum (Social amoeba).